The following is a 271-amino-acid chain: Low choriolytic enzyme (271 aa).

An N-terminal signal peptide occupies residues 1 to 20 (MDLLAKASVLLLLLLSLSNA). The propeptide at 21-71 (QTDNMEEAENGSSKEEIDESELEDVSSIIFRMNNNSMEELLEGDLVLPKTR) is activation peptide. Asn-30 and Asn-54 each carry an N-linked (GlcNAc...) asparagine glycan. The 200-residue stretch at 72 to 271 (NAMKCFGAPD…ILRVNKLYKC (200 aa)) folds into the Peptidase M12A domain. 3 disulfides stabilise this stretch: Cys-76–Cys-83, Cys-123–Cys-271, and Cys-144–Cys-164. His-172 serves as a coordination point for Zn(2+). Residue Glu-173 is part of the active site. Zn(2+)-binding residues include His-176 and His-182. N-linked (GlcNAc...) asparagine glycosylation occurs at Asn-211.

The cofactor is Zn(2+).

The protein resides in the zymogen granule. The catalysed reaction is Hydrolysis of the inner layer of fish egg envelope. Also hydrolysis of casein and small molecule substrates such as succinyl-Leu-Leu-Val-Tyr-|-7-(4-methyl)coumarylamide.. In terms of biological role, participates in the breakdown of the egg envelope, which is derived from the egg extracellular matrix, at the time of hatching. Thus allowing the newly hatched fish to swim free. LCE solubilizes the egg envelope only after it has been swollen by the action of HCE. This is Low choriolytic enzyme (lce) from Oryzias latipes (Japanese rice fish).